Reading from the N-terminus, the 325-residue chain is mRNA decay factor CTH1 (325 aa).

2 consecutive C3H1-type zinc fingers follow at residues 204–232 (LYKT…HGLN) and 242–270 (NYRT…HGDD). Residues 284-306 (SKDTALTPLPTSLAPSNNDNITN) are disordered. The span at 292–306 (LPTSLAPSNNDNITN) shows a compositional bias: polar residues.

Binds to specific AU-rich elements (ARE) in the 3'-untranslated region of target mRNAs and promotes their degradation. In response to iron deficiency, promotes the decay of many mRNAs encoding proteins involved in iron-dependent pathways. Negatively regulates primarily iron-dependent mitochondrial processes including respiration and amino acid biosynthesis. This Saccharomyces cerevisiae (strain ATCC 204508 / S288c) (Baker's yeast) protein is mRNA decay factor CTH1 (CTH1).